Here is a 338-residue protein sequence, read N- to C-terminus: Lipoyl synthase (338 aa).

Positions 1 to 24 (MTTVQEAVPNLIPTQDATPRPAPK) are disordered. Residues C84, C89, C95, C110, C114, C117, and S324 each contribute to the [4Fe-4S] cluster site. Positions 96–313 (FSGGTATFMI…AEEGYKMGFK (218 aa)) constitute a Radical SAM core domain.

Belongs to the radical SAM superfamily. Lipoyl synthase family. [4Fe-4S] cluster serves as cofactor.

It is found in the cytoplasm. The catalysed reaction is [[Fe-S] cluster scaffold protein carrying a second [4Fe-4S](2+) cluster] + N(6)-octanoyl-L-lysyl-[protein] + 2 oxidized [2Fe-2S]-[ferredoxin] + 2 S-adenosyl-L-methionine + 4 H(+) = [[Fe-S] cluster scaffold protein] + N(6)-[(R)-dihydrolipoyl]-L-lysyl-[protein] + 4 Fe(3+) + 2 hydrogen sulfide + 2 5'-deoxyadenosine + 2 L-methionine + 2 reduced [2Fe-2S]-[ferredoxin]. It functions in the pathway protein modification; protein lipoylation via endogenous pathway; protein N(6)-(lipoyl)lysine from octanoyl-[acyl-carrier-protein]: step 2/2. In terms of biological role, catalyzes the radical-mediated insertion of two sulfur atoms into the C-6 and C-8 positions of the octanoyl moiety bound to the lipoyl domains of lipoate-dependent enzymes, thereby converting the octanoylated domains into lipoylated derivatives. This Pseudomonas putida (strain W619) protein is Lipoyl synthase.